A 340-amino-acid chain; its full sequence is Guanine nucleotide-binding protein G(I)/G(S)/G(T) subunit beta-1 (340 aa).

WD repeat units follow at residues 53–83, 95–125, 141–170, 182–212, 224–254, 268–298, and 310–340; these read GHLA…IIWD, LRSS…PIYN, GHTG…ALWD, GHTG…KLWD, GHES…RLFD, NIIC…NVWD, and GHDN…KIWN.

Belongs to the WD repeat G protein beta family. G proteins are composed of 3 units, alpha, beta and gamma.

Functionally, guanine nucleotide-binding proteins (G proteins) are involved as a modulator or transducer in various transmembrane signaling systems. The beta and gamma chains are required for the GTPase activity, for replacement of GDP by GTP, and for G protein-effector interaction. This chain is Guanine nucleotide-binding protein G(I)/G(S)/G(T) subunit beta-1 (gnb1), found in Xenopus laevis (African clawed frog).